The chain runs to 265 residues: MKIAIAGASGRMGRMLIEAVLNDSDAQLVGALDRADSPFLGQDAGAFLGKETGVKLTDDLDAVFAQADYLIDFTRPEGTIAHVAAALRHEVKLVIGTTGFTAEQKAELQAAAARIGIVFAANMSVGVNVTLKLLEFAAKHFSHGYDIEIIEAHHRHKVDAPSGTALMMGEAVAGALGRSLEDCAVYGRQGVTGERDPSTIGFAAVRGGDIVGDHTVLFAGIGERIEITHKSSSRVSYAQGALRAVRFLSARGAGLFDMQDVLGLR.

NAD(+) is bound by residues 7–12 and aspartate 33; that span reads GASGRM. An NADP(+)-binding site is contributed by arginine 34. Residues 96 to 98 and 120 to 123 each bind NAD(+); these read GTT and AANM. Catalysis depends on histidine 153, which acts as the Proton donor/acceptor. Histidine 154 lines the (S)-2,3,4,5-tetrahydrodipicolinate pocket. Catalysis depends on lysine 157, which acts as the Proton donor. 163–164 is a binding site for (S)-2,3,4,5-tetrahydrodipicolinate; that stretch reads GT.

Belongs to the DapB family.

The protein resides in the cytoplasm. The enzyme catalyses (S)-2,3,4,5-tetrahydrodipicolinate + NAD(+) + H2O = (2S,4S)-4-hydroxy-2,3,4,5-tetrahydrodipicolinate + NADH + H(+). It carries out the reaction (S)-2,3,4,5-tetrahydrodipicolinate + NADP(+) + H2O = (2S,4S)-4-hydroxy-2,3,4,5-tetrahydrodipicolinate + NADPH + H(+). The protein operates within amino-acid biosynthesis; L-lysine biosynthesis via DAP pathway; (S)-tetrahydrodipicolinate from L-aspartate: step 4/4. Functionally, catalyzes the conversion of 4-hydroxy-tetrahydrodipicolinate (HTPA) to tetrahydrodipicolinate. The polypeptide is 4-hydroxy-tetrahydrodipicolinate reductase (Burkholderia ambifaria (strain ATCC BAA-244 / DSM 16087 / CCUG 44356 / LMG 19182 / AMMD) (Burkholderia cepacia (strain AMMD))).